Consider the following 633-residue polypeptide: Chaperone protein HtpG (633 aa).

Positions 1–341 (MTAPHETMSF…SADLPLNVSR (341 aa)) are a; substrate-binding. Residues 342–562 (ELLQESRDVK…DGDMSGYLQR (221 aa)) are b. The segment at 563–633 (LLKQAGQKAP…YVQRVNRLLA (71 aa)) is c.

It belongs to the heat shock protein 90 family. In terms of assembly, homodimer.

It localises to the cytoplasm. In terms of biological role, molecular chaperone. Has ATPase activity. This chain is Chaperone protein HtpG, found in Cupriavidus metallidurans (strain ATCC 43123 / DSM 2839 / NBRC 102507 / CH34) (Ralstonia metallidurans).